The primary structure comprises 292 residues: Acetyl-coenzyme A carboxylase carboxyl transferase subunit beta (292 aa).

Residues 29–292 (LWSKCPECGQ…HGCESRVASS (264 aa)) enclose the CoA carboxyltransferase N-terminal domain. Cys33, Cys36, Cys52, and Cys55 together coordinate Zn(2+). Residues 33–55 (CPECGQVVYRKDLLSNASVCGNC) form a C4-type zinc finger.

This sequence belongs to the AccD/PCCB family. As to quaternary structure, acetyl-CoA carboxylase is a heterohexamer composed of biotin carboxyl carrier protein (AccB), biotin carboxylase (AccC) and two subunits each of ACCase subunit alpha (AccA) and ACCase subunit beta (AccD). Zn(2+) serves as cofactor.

Its subcellular location is the cytoplasm. It catalyses the reaction N(6)-carboxybiotinyl-L-lysyl-[protein] + acetyl-CoA = N(6)-biotinyl-L-lysyl-[protein] + malonyl-CoA. It participates in lipid metabolism; malonyl-CoA biosynthesis; malonyl-CoA from acetyl-CoA: step 1/1. Functionally, component of the acetyl coenzyme A carboxylase (ACC) complex. Biotin carboxylase (BC) catalyzes the carboxylation of biotin on its carrier protein (BCCP) and then the CO(2) group is transferred by the transcarboxylase to acetyl-CoA to form malonyl-CoA. This is Acetyl-coenzyme A carboxylase carboxyl transferase subunit beta from Synechococcus sp. (strain CC9311).